A 261-amino-acid chain; its full sequence is MGFLQGKKILITGMISERSIAYGIAKACREQGAELAFTYVVDKLEERVRKMAAELDSELVFRCDVASDDEINQVFADLGKHWDGLDGLVHSIGFAPKEALSGDFLDSISREAFNTAHEISAYSLPALAKAARPMMRGRNSAIVALSYLGAVRAIPNYNVMGMAKASLEAGIRFTAACLGKEGIRCNGISAGPIKTLAASGIADFGKLLGHVAAHNPLRRNVTIEEVGNTAAFLLSDLSSGITGEITYVDGGYSINALSTEG.

NAD(+)-binding positions include G13, 19–20, 64–65, and I92; these read SI and DV. A95 contributes to the substrate binding site. Catalysis depends on proton acceptor residues Y147 and Y157. NAD(+)-binding positions include K164 and 193–197; that span reads IKTLA.

Belongs to the short-chain dehydrogenases/reductases (SDR) family. FabI subfamily. Homotetramer.

It catalyses the reaction a 2,3-saturated acyl-[ACP] + NAD(+) = a (2E)-enoyl-[ACP] + NADH + H(+). Its pathway is lipid metabolism; fatty acid biosynthesis. Catalyzes the reduction of a carbon-carbon double bond in an enoyl moiety that is covalently linked to an acyl carrier protein (ACP). Involved in the elongation cycle of fatty acid which are used in the lipid metabolism. The polypeptide is Enoyl-[acyl-carrier-protein] reductase [NADH] FabI (fabI) (Neisseria meningitidis serogroup B (strain ATCC BAA-335 / MC58)).